We begin with the raw amino-acid sequence, 172 residues long: Large ribosomal subunit protein bL17m (172 aa).

The N-terminal 8 residues, 1 to 8, are a transit peptide targeting the mitochondrion; it reads MRLSFAAA.

This sequence belongs to the bacterial ribosomal protein bL17 family. In terms of assembly, component of the mitochondrial ribosome large subunit (39S) which comprises a 16S rRNA and about 50 distinct proteins.

The protein localises to the mitochondrion. The sequence is that of Large ribosomal subunit protein bL17m (MRPL17) from Bos taurus (Bovine).